The chain runs to 184 residues: Putative DNA-directed RNA polymerase subunit 454R (184 aa).

The protein belongs to the archaeal Rpo5/eukaryotic RPB5 RNA polymerase subunit family.

Functionally, component of the DNA-dependent RNA polymerase that catalyzes the transcription in the cytoplasm of viral DNA into RNA using the four ribonucleoside triphosphates as substrates. This is Putative DNA-directed RNA polymerase subunit 454R from Invertebrate iridescent virus 6 (IIV-6).